The chain runs to 188 residues: Ribose 1,5-bisphosphate phosphokinase PhnN (188 aa).

9 to 16 serves as a coordination point for ATP; it reads GPSGAGKD.

It belongs to the ribose 1,5-bisphosphokinase family.

The catalysed reaction is alpha-D-ribose 1,5-bisphosphate + ATP = 5-phospho-alpha-D-ribose 1-diphosphate + ADP. The protein operates within metabolic intermediate biosynthesis; 5-phospho-alpha-D-ribose 1-diphosphate biosynthesis; 5-phospho-alpha-D-ribose 1-diphosphate from D-ribose 5-phosphate (route II): step 3/3. In terms of biological role, catalyzes the phosphorylation of ribose 1,5-bisphosphate to 5-phospho-D-ribosyl alpha-1-diphosphate (PRPP). The polypeptide is Ribose 1,5-bisphosphate phosphokinase PhnN (Pectobacterium atrosepticum (strain SCRI 1043 / ATCC BAA-672) (Erwinia carotovora subsp. atroseptica)).